Reading from the N-terminus, the 129-residue chain is MAPKVALFLALSLLFAATAHGCEPNCSGPVVPTPPVVPTPSSHSHGRCPIDALKLKVCAKVLGLVKVGLPQYEQCCPLLEGLVDLDAALCLCTAIKANVLGIHLNVPLSLNFILNNCGRICPEDFTCPN.

The segment at residues Met1 to Ala19 is a signal peptide (or 21). Asn25 carries an N-linked (GlcNAc...) asparagine glycan. A run of 2 repeats spans residues Pro29 to Pro34 and Pro35 to Pro40. The interval Pro29–Pro40 is 2 X 6 AA tandem repeats of P-V-V-P-T-P.

The protein to carrot DC2.15 and PEMB3. As to expression, cortical ground meristem of developing roots.

Functionally, delineates a novel subset of developing cortical cells. It is probably involved in some aspect of transport of molecules to or from the vasculature. The sequence is that of Cortical cell-delineating protein from Zea mays (Maize).